The primary structure comprises 155 residues: SsrA-binding protein (155 aa).

Belongs to the SmpB family.

Its subcellular location is the cytoplasm. Required for rescue of stalled ribosomes mediated by trans-translation. Binds to transfer-messenger RNA (tmRNA), required for stable association of tmRNA with ribosomes. tmRNA and SmpB together mimic tRNA shape, replacing the anticodon stem-loop with SmpB. tmRNA is encoded by the ssrA gene; the 2 termini fold to resemble tRNA(Ala) and it encodes a 'tag peptide', a short internal open reading frame. During trans-translation Ala-aminoacylated tmRNA acts like a tRNA, entering the A-site of stalled ribosomes, displacing the stalled mRNA. The ribosome then switches to translate the ORF on the tmRNA; the nascent peptide is terminated with the 'tag peptide' encoded by the tmRNA and targeted for degradation. The ribosome is freed to recommence translation, which seems to be the essential function of trans-translation. The protein is SsrA-binding protein of Streptococcus equi subsp. equi (strain 4047).